The primary structure comprises 185 residues: Ribosome-recycling factor (185 aa).

Belongs to the RRF family.

Its subcellular location is the cytoplasm. In terms of biological role, responsible for the release of ribosomes from messenger RNA at the termination of protein biosynthesis. May increase the efficiency of translation by recycling ribosomes from one round of translation to another. The protein is Ribosome-recycling factor of Halalkalibacterium halodurans (strain ATCC BAA-125 / DSM 18197 / FERM 7344 / JCM 9153 / C-125) (Bacillus halodurans).